We begin with the raw amino-acid sequence, 542 residues long: Chaperonin GroEL (542 aa).

ATP-binding positions include 29 to 32, Lys50, 86 to 90, Gly414, and Asp494; these read TLGP and DGTTT.

This sequence belongs to the chaperonin (HSP60) family. Forms a cylinder of 14 subunits composed of two heptameric rings stacked back-to-back. Interacts with the co-chaperonin GroES.

The protein resides in the cytoplasm. It catalyses the reaction ATP + H2O + a folded polypeptide = ADP + phosphate + an unfolded polypeptide.. In terms of biological role, together with its co-chaperonin GroES, plays an essential role in assisting protein folding. The GroEL-GroES system forms a nano-cage that allows encapsulation of the non-native substrate proteins and provides a physical environment optimized to promote and accelerate protein folding. The protein is Chaperonin GroEL of Cytophaga hutchinsonii (strain ATCC 33406 / DSM 1761 / CIP 103989 / NBRC 15051 / NCIMB 9469 / D465).